A 240-amino-acid chain; its full sequence is Tetrahydromethanopterin S-methyltransferase subunit A (240 aa).

Residues 1 to 218 lie on the Cytoplasmic side of the membrane; sequence MAEKREPAAG…KFHAGVHAGK (218 aa). Histidine 85 contacts 5-hydroxybenzimidazolylcob(I)amide. A helical transmembrane segment spans residues 219–239; it reads FEGIMIGLAITLSLLGLILFG. Arginine 240 is a topological domain (extracellular).

The protein belongs to the MtrA family. As to quaternary structure, the complex is composed of 8 subunits; MtrA, MtrB, MtrC, MtrD, MtrE, MtrF, MtrG and MtrH. 5-hydroxybenzimidazolylcob(I)amide is required as a cofactor.

The protein localises to the cell membrane. It carries out the reaction 5-methyl-5,6,7,8-tetrahydromethanopterin + coenzyme M + 2 Na(+)(in) = 5,6,7,8-tetrahydromethanopterin + methyl-coenzyme M + 2 Na(+)(out). Its pathway is one-carbon metabolism; methanogenesis from CO(2); methyl-coenzyme M from 5,10-methylene-5,6,7,8-tetrahydromethanopterin: step 2/2. Functionally, part of a complex that catalyzes the formation of methyl-coenzyme M and tetrahydromethanopterin from coenzyme M and methyl-tetrahydromethanopterin. This is an energy-conserving, sodium-ion translocating step. The polypeptide is Tetrahydromethanopterin S-methyltransferase subunit A (Methanohalophilus mahii (strain ATCC 35705 / DSM 5219 / SLP)).